The primary structure comprises 100 residues: MHLTSREQEKLMLFLAGELAAKRKARGVKLNYPETIAYIASHLQEAAREGMSVAEVMQYGATLLTVDDVMEGVAEMVHEVQIEATFPDGTKLVTVHNPIR.

It belongs to the urease gamma subunit family. In terms of assembly, heterotrimer of UreA (gamma), UreB (beta) and UreC (alpha) subunits. Three heterotrimers associate to form the active enzyme.

Its subcellular location is the cytoplasm. It catalyses the reaction urea + 2 H2O + H(+) = hydrogencarbonate + 2 NH4(+). It participates in nitrogen metabolism; urea degradation; CO(2) and NH(3) from urea (urease route): step 1/1. In Haemophilus influenzae (strain ATCC 51907 / DSM 11121 / KW20 / Rd), this protein is Urease subunit gamma.